Here is a 98-residue protein sequence, read N- to C-terminus: Large ribosomal subunit protein uL23 (98 aa).

It belongs to the universal ribosomal protein uL23 family. Part of the 50S ribosomal subunit. Contacts protein L29, and trigger factor when it is bound to the ribosome.

One of the early assembly proteins it binds 23S rRNA. One of the proteins that surrounds the polypeptide exit tunnel on the outside of the ribosome. Forms the main docking site for trigger factor binding to the ribosome. This chain is Large ribosomal subunit protein uL23, found in Parafrankia sp. (strain EAN1pec).